The following is a 335-amino-acid chain: Eukaryotic translation initiation factor 3 subunit I (335 aa).

WD repeat units follow at residues 8–47, 50–91, 145–184, 189–228, and 286–325; these read GHER…RLGT, GHQG…KTWD, CAES…LLFN, EPDL…VMKT, and GHFG…FDFT.

Belongs to the eIF-3 subunit I family. In terms of assembly, component of the eukaryotic translation initiation factor 3 (eIF-3) complex.

It is found in the cytoplasm. In terms of biological role, component of the eukaryotic translation initiation factor 3 (eIF-3) complex, which is involved in protein synthesis of a specialized repertoire of mRNAs and, together with other initiation factors, stimulates binding of mRNA and methionyl-tRNAi to the 40S ribosome. The eIF-3 complex specifically targets and initiates translation of a subset of mRNAs involved in cell proliferation. This chain is Eukaryotic translation initiation factor 3 subunit I (tif34), found in Botryotinia fuckeliana (strain B05.10) (Noble rot fungus).